A 499-amino-acid polypeptide reads, in one-letter code: Protein phosphatase PP2A 55 kDa regulatory subunit (499 aa).

The segment at 1–30 (MGRWGRQSPVLEPPDPQMQTTPPPPTLPPR) is disordered. A compositionally biased stretch (pro residues) spans 11–28 (LEPPDPQMQTTPPPPTLP). WD repeat units follow at residues 79–118 (TDADIISCVEFNHDGELLATGDKGGRVVIFQRDPASKAAN), 144–185 (EIEE…KSFG), 228–266 (AHTYHINSISVNSDQETFLSADDLRINLWHLEVVNQSYN), 277–317 (ELTE…LCDR), 336–374 (EIISSISDVKLSNSGRYMISRDYLSIKVWDLHMETKPIE), 391–432 (ENDC…DVTL), and 467–498 (DFNKKILHTAWHPEENIIAVAATNNLFIFQDK).

This sequence belongs to the phosphatase 2A regulatory subunit B family. In terms of assembly, PP2A exists in several trimeric forms, all of which consist of a core composed of a catalytic subunit associated with a 65 kDa regulatory subunit (PR65) (subunit A). The core complex associates with a third, variable subunit (subunit B), which confers distinct properties to the holoenzyme.

Could perform a substrate recognition function or could be responsible for targeting the enzyme complex to the appropriate subcellular compartment. The polypeptide is Protein phosphatase PP2A 55 kDa regulatory subunit (tws) (Drosophila melanogaster (Fruit fly)).